The following is a 71-amino-acid chain: Large ribosomal subunit protein bL32c (71 aa).

The interval 1–24 is disordered; sequence MAVPKKRTSRSKKKIRKNVRKGKK.

This sequence belongs to the bacterial ribosomal protein bL32 family.

The protein localises to the plastid. It is found in the chloroplast. This Pinus koraiensis (Korean pine) protein is Large ribosomal subunit protein bL32c.